A 431-amino-acid chain; its full sequence is Enolase (431 aa).

The segment at 27–47 (LESGHSGRAAVPSGASTGSRE) is disordered. Glutamine 163 is a (2R)-2-phosphoglycerate binding site. Glutamate 205 (proton donor) is an active-site residue. Mg(2+)-binding residues include aspartate 242, glutamate 285, and aspartate 312. The (2R)-2-phosphoglycerate site is built by lysine 337, arginine 366, serine 367, and lysine 388. Lysine 337 acts as the Proton acceptor in catalysis.

Belongs to the enolase family. Requires Mg(2+) as cofactor.

The protein localises to the cytoplasm. Its subcellular location is the secreted. The protein resides in the cell surface. The enzyme catalyses (2R)-2-phosphoglycerate = phosphoenolpyruvate + H2O. Its pathway is carbohydrate degradation; glycolysis; pyruvate from D-glyceraldehyde 3-phosphate: step 4/5. Functionally, catalyzes the reversible conversion of 2-phosphoglycerate (2-PG) into phosphoenolpyruvate (PEP). It is essential for the degradation of carbohydrates via glycolysis. This chain is Enolase, found in Oleidesulfovibrio alaskensis (strain ATCC BAA-1058 / DSM 17464 / G20) (Desulfovibrio alaskensis).